Consider the following 574-residue polypeptide: Septation ring formation regulator EzrA (574 aa).

Residues 1–7 lie on the Extracellular side of the membrane; the sequence is MSSGIIL. A helical transmembrane segment spans residues 8 to 26; it reads LIVAIVLLVIIAYLVGVII. At 27 to 574 the chain is on the cytoplasmic side; it reads RKRNDSLITS…YEKTREHIRF (548 aa). 3 coiled-coil regions span residues 102–141, 274–350, and 459–520; these read NFIR…EEKN, ELVT…ETES, and QLEA…SFEA.

The protein belongs to the EzrA family.

Its subcellular location is the cell membrane. Functionally, negative regulator of FtsZ ring formation; modulates the frequency and position of FtsZ ring formation. Inhibits FtsZ ring formation at polar sites. Interacts either with FtsZ or with one of its binding partners to promote depolymerization. The sequence is that of Septation ring formation regulator EzrA from Streptococcus pyogenes serotype M3 (strain SSI-1).